The sequence spans 126 residues: Small ribosomal subunit protein bS6 (126 aa).

This sequence belongs to the bacterial ribosomal protein bS6 family.

In terms of biological role, binds together with bS18 to 16S ribosomal RNA. The polypeptide is Small ribosomal subunit protein bS6 (Actinobacillus succinogenes (strain ATCC 55618 / DSM 22257 / CCUG 43843 / 130Z)).